We begin with the raw amino-acid sequence, 232 residues long: Ubiquinone biosynthesis O-methyltransferase (232 aa).

4 residues coordinate S-adenosyl-L-methionine: arginine 36, glycine 55, aspartate 76, and leucine 120.

This sequence belongs to the methyltransferase superfamily. UbiG/COQ3 family.

The catalysed reaction is a 3-demethylubiquinol + S-adenosyl-L-methionine = a ubiquinol + S-adenosyl-L-homocysteine + H(+). It catalyses the reaction a 3-(all-trans-polyprenyl)benzene-1,2-diol + S-adenosyl-L-methionine = a 2-methoxy-6-(all-trans-polyprenyl)phenol + S-adenosyl-L-homocysteine + H(+). It participates in cofactor biosynthesis; ubiquinone biosynthesis. In terms of biological role, O-methyltransferase that catalyzes the 2 O-methylation steps in the ubiquinone biosynthetic pathway. In Pseudomonas fluorescens (strain Pf0-1), this protein is Ubiquinone biosynthesis O-methyltransferase.